The following is a 251-amino-acid chain: Large ribosomal subunit protein uL3 (251 aa).

Disordered stretches follow at residues S140–M162 and A229–A251. Q151 carries the N5-methylglutamine modification.

The protein belongs to the universal ribosomal protein uL3 family. Part of the 50S ribosomal subunit. Forms a cluster with proteins L14 and L19. Methylated by PrmB.

Its function is as follows. One of the primary rRNA binding proteins, it binds directly near the 3'-end of the 23S rRNA, where it nucleates assembly of the 50S subunit. This is Large ribosomal subunit protein uL3 from Methylobacterium nodulans (strain LMG 21967 / CNCM I-2342 / ORS 2060).